The chain runs to 227 residues: 7-cyano-7-deazaguanine synthase (227 aa).

16–26 serves as a coordination point for ATP; the sequence is FSGGQDSTTCL. Zn(2+) is bound by residues Cys194, Cys202, Cys205, and Cys208.

Belongs to the QueC family. The cofactor is Zn(2+).

The catalysed reaction is 7-carboxy-7-deazaguanine + NH4(+) + ATP = 7-cyano-7-deazaguanine + ADP + phosphate + H2O + H(+). Its pathway is purine metabolism; 7-cyano-7-deazaguanine biosynthesis. In terms of biological role, catalyzes the ATP-dependent conversion of 7-carboxy-7-deazaguanine (CDG) to 7-cyano-7-deazaguanine (preQ(0)). This Haemophilus influenzae (strain PittEE) protein is 7-cyano-7-deazaguanine synthase.